Reading from the N-terminus, the 456-residue chain is UDP-N-acetylglucosamine 1-carboxyvinyltransferase (456 aa).

34 to 35 contributes to the phosphoenolpyruvate binding site; the sequence is KN. R104 contributes to the UDP-N-acetyl-alpha-D-glucosamine binding site. C128 (proton donor) is an active-site residue. C128 is modified (2-(S-cysteinyl)pyruvic acid O-phosphothioketal). The UDP-N-acetyl-alpha-D-glucosamine site is built by D319 and I341.

Belongs to the EPSP synthase family. MurA subfamily.

It localises to the cytoplasm. The catalysed reaction is phosphoenolpyruvate + UDP-N-acetyl-alpha-D-glucosamine = UDP-N-acetyl-3-O-(1-carboxyvinyl)-alpha-D-glucosamine + phosphate. It participates in cell wall biogenesis; peptidoglycan biosynthesis. Functionally, cell wall formation. Adds enolpyruvyl to UDP-N-acetylglucosamine. The chain is UDP-N-acetylglucosamine 1-carboxyvinyltransferase from Prochlorococcus marinus (strain AS9601).